The chain runs to 240 residues: Probable transcriptional regulatory protein MADE_1004275 (240 aa).

It belongs to the TACO1 family.

It localises to the cytoplasm. The polypeptide is Probable transcriptional regulatory protein MADE_1004275 (Alteromonas mediterranea (strain DSM 17117 / CIP 110805 / LMG 28347 / Deep ecotype)).